The following is a 492-amino-acid chain: 3-ketoacyl-CoA synthase 5 (492 aa).

A run of 2 helical transmembrane segments spans residues 20–40 (LINN…AIEL) and 59–79 (LLHI…YFMS). Residues 76–365 (YFMSKPRTVY…FLSSLIGRKI (290 aa)) enclose the FAE domain. Residues Cys220, His299, His383, His387, His416, and Asn420 contribute to the active site.

Belongs to the thiolase-like superfamily. Chalcone/stilbene synthases family. Expressed in siliques, flowers, leaves and seedlings.

The protein localises to the membrane. The catalysed reaction is a very-long-chain acyl-CoA + malonyl-CoA + H(+) = a very-long-chain 3-oxoacyl-CoA + CO2 + CoA. Its pathway is lipid metabolism; fatty acid biosynthesis. With respect to regulation, inhibited by K3 herbicides such as alachlor, allidochlor, anilofos, cafenstrole and flufenacet. Strongly inhibited by metazachlor and mefluidide. In terms of biological role, mediates mostly the synthesis of VLCFAs from 26 to 30 carbons in length (e.g. C20:1, C26, C28, C30). The chain is 3-ketoacyl-CoA synthase 5 from Arabidopsis thaliana (Mouse-ear cress).